Reading from the N-terminus, the 460-residue chain is Putative protein p41 (460 aa).

Positions 14–186 (INHLLDIKRS…WGQAWFVDQG (173 aa)) constitute a Helicase ATP-binding domain.

The chain is Putative protein p41 (41) from Escherichia coli (Bacteriophage APSE-1).